A 119-amino-acid chain; its full sequence is MKGKGKFNARTRRHLRVRKRISGTTSVPRLVVNRSARHMFVQVVDDTQSRTIAYASTMEADVRALEGDKTAKAKRVGELVAERAKAAGIEAAVFDRAGNKYHGRVAAVADGAREGGLQL.

The protein belongs to the universal ribosomal protein uL18 family. As to quaternary structure, part of the 50S ribosomal subunit; part of the 5S rRNA/L5/L18/L25 subcomplex. Contacts the 5S and 23S rRNAs.

This is one of the proteins that bind and probably mediate the attachment of the 5S RNA into the large ribosomal subunit, where it forms part of the central protuberance. This is Large ribosomal subunit protein uL18 from Micrococcus luteus (Micrococcus lysodeikticus).